The primary structure comprises 358 residues: Histidinol-phosphate aminotransferase (358 aa).

K217 is subject to N6-(pyridoxal phosphate)lysine.

Belongs to the class-II pyridoxal-phosphate-dependent aminotransferase family. Histidinol-phosphate aminotransferase subfamily. Homodimer. Pyridoxal 5'-phosphate is required as a cofactor.

It catalyses the reaction L-histidinol phosphate + 2-oxoglutarate = 3-(imidazol-4-yl)-2-oxopropyl phosphate + L-glutamate. It participates in amino-acid biosynthesis; L-histidine biosynthesis; L-histidine from 5-phospho-alpha-D-ribose 1-diphosphate: step 7/9. The chain is Histidinol-phosphate aminotransferase from Ruminiclostridium cellulolyticum (strain ATCC 35319 / DSM 5812 / JCM 6584 / H10) (Clostridium cellulolyticum).